The following is a 275-amino-acid chain: Voltage-dependent calcium channel gamma-5 subunit (275 aa).

4 helical membrane-spanning segments follow: residues A8–V28, F103–I123, I129–L149, and F181–M201.

This sequence belongs to the PMP-22/EMP/MP20 family. CACNG subfamily. The L-type calcium channel is composed of five subunits: alpha-1, alpha-2/delta, beta and gamma. Acts as an auxiliary subunit for AMPA-selective glutamate receptors (AMPARs). Found in a complex with GRIA1, GRIA2, GRIA3, GRIA4, CNIH2, CNIH3, CACNG2, CACNG3, CACNG4, CACNG7 and CACNG8. Interacts with GRIA1, GRIA2, GRIA3 and GRIA4. In terms of tissue distribution, brain. Enriched in Bergman glia, as well as a variety of neuronal populations including locus coeruleus, olfactory bulb, lateral septal nucleus, interpeduncular nucleus, and the CA2 and rostral/medial CA1 regions of hippocampus.

Its subcellular location is the membrane. The protein resides in the postsynaptic density membrane. Functionally, regulates the gating properties of AMPA-selective glutamate receptors (AMPARs). Modulates their gating properties by accelerating their rates of activation, deactivation and desensitization. Displays subunit-specific AMPA receptor regulation. Shows specificity for GRIA1, GRIA4 and the long isoform of GRIA2. Thought to stabilize the calcium channel in an inactivated (closed) state. The polypeptide is Voltage-dependent calcium channel gamma-5 subunit (Cacng5) (Mus musculus (Mouse)).